Reading from the N-terminus, the 1021-residue chain is tRNA wybutosine-synthesizing protein 4 (1021 aa).

S-adenosyl-L-methionine contacts are provided by residues Arg-68, Asp-122, 171–172 (DL), and Glu-198. The JmjC domain maps to 826–980 (PTEAPANLAE…STGRDVYGNR (155 aa)).

Belongs to the methyltransferase superfamily. LCMT family.

It carries out the reaction 7-[(3S)-3-amino-3-carboxypropyl]wyosine(37) in tRNA(Phe) + S-adenosyl-L-methionine = 7-[(3S)-(3-amino-3-methoxycarbonyl)propyl]wyosine(37) in tRNA(Phe) + S-adenosyl-L-homocysteine. The enzyme catalyses 7-[(3S)-(3-amino-3-methoxycarbonyl)propyl]wyosine(37) in tRNA(Phe) + S-adenosyl-L-methionine + CO2 = wybutosine(37) in tRNA(Phe) + S-adenosyl-L-homocysteine + 2 H(+). It participates in tRNA modification; wybutosine-tRNA(Phe) biosynthesis. Its function is as follows. Probable S-adenosyl-L-methionine-dependent methyltransferase that acts as a component of the wybutosine biosynthesis pathway. Wybutosine is a hyper modified guanosine with a tricyclic base found at the 3'-position adjacent to the anticodon of eukaryotic phenylalanine tRNA. May methylate the carboxyl group of leucine residues to form alpha-leucine ester residues. This is tRNA wybutosine-synthesizing protein 4 (PPM2) from Gibberella zeae (strain ATCC MYA-4620 / CBS 123657 / FGSC 9075 / NRRL 31084 / PH-1) (Wheat head blight fungus).